Reading from the N-terminus, the 2049-residue chain is Polyglutamine-repeat protein pqn-41 (2049 aa).

A disordered region spans residues 1 to 58; the sequence is MKPKKLQQGSDSAHTSDTESTKTCEKTAKKLPKTQKKLQKSKKTAKKRRDEEFRIFFP. Positions 1 to 1601 are sufficient to prevent linker cell death; it reads MKPKKLQQGS…TTSQHQQSIQ (1601 aa). Residues 14 to 28 show a composition bias toward basic and acidic residues; sequence HTSDTESTKTCEKTA. The segment covering 29–47 has biased composition (basic residues); it reads KKLPKTQKKLQKSKKTAKK. 2 coiled-coil regions span residues 264–302 and 396–432; these read RRQE…ANSD and TNAG…DRNH. The interval 459-492 is disordered; sequence RGRNSTENSDSESSSEASEPPDDVITKEEPTDFS. The span at 463–476 shows a compositional bias: low complexity; the sequence is STENSDSESSSEAS. Coiled-coil stretches lie at residues 686 to 730, 756 to 796, and 822 to 880; these read ESFE…SFET, ISAD…REFS, and QSSI…ARKL. The span at 1134–1150 shows a compositional bias: low complexity; the sequence is QQQHNHQNFQQQQQGNH. Disordered regions lie at residues 1134-1198, 1236-1265, 1481-1616, and 1636-1661; these read QQQH…ENAA, AAAA…QQQN, YKQS…GAAY, and ATPK…TSQA. The segment covering 1162 to 1171 has biased composition (basic residues); that stretch reads QKRKYTKRKA. The segment covering 1176-1194 has biased composition (polar residues); sequence AVASSSDQNGMKSPGSSAM. Low complexity predominate over residues 1495–1533; the sequence is STSSSSAAPASAPAPRAGAGAGATSSSAASSSTSTPSSS. A compositionally biased stretch (basic residues) spans 1534–1546; the sequence is SHHKKSSPPHHQK. Composition is skewed to low complexity over residues 1569 to 1604 and 1649 to 1661; these read SAPI…QFSQ and ATQQ…TSQA. 2 coiled-coil regions span residues 1659–1685 and 1725–1801; these read SQAS…AAAA and QQYL…LQNI. Residues 1836 to 1858 form a disordered region; it reads AQAQQAPPTSQPSQAATPQQQQQ. 2 coiled-coil regions span residues 1863–1961 and 1991–2041; these read RQME…AAAA and SAQQ…AQQK.

Expressed in the linker cell just before it dies.

The protein resides in the cytoplasm. In terms of biological role, in males, required for non-apoptotic death of the linker cell once it has finished guiding gonad elongation at the end of larval development. May be involved in nuclear envelope crenellation in the linker cell. In males, promotes linker cell survival. In Caenorhabditis elegans, this protein is Polyglutamine-repeat protein pqn-41.